The following is an 840-amino-acid chain: Protein translocase subunit SecA (840 aa).

Residues Gln-89, 107–111, and Asp-514 each bind ATP; that span reads GEGKT.

Belongs to the SecA family. As to quaternary structure, monomer and homodimer. Part of the essential Sec protein translocation apparatus which comprises SecA, SecYEG and auxiliary proteins SecDF-YajC and YidC.

It is found in the cell inner membrane. The protein localises to the cytoplasm. It carries out the reaction ATP + H2O + cellular proteinSide 1 = ADP + phosphate + cellular proteinSide 2.. Functionally, part of the Sec protein translocase complex. Interacts with the SecYEG preprotein conducting channel. Has a central role in coupling the hydrolysis of ATP to the transfer of proteins into and across the cell membrane, serving as an ATP-driven molecular motor driving the stepwise translocation of polypeptide chains across the membrane. The chain is Protein translocase subunit SecA from Blochmanniella floridana.